The following is a 612-amino-acid chain: MARQLFTPPITNPRFDPNQSIRESYKNTTGGMQFQQNLHEDQNDNERSSCDGDENSTTGERLENNKSPILTKQEIDEALNTVTNLPPELSKLIDIFIDDLKQPKYVRPLSVLQLSSLFQSFYIKFDKASFQHVSSANNNGYYFSGGGSSSFLAAKETLSSGLSGIFGRSRSSSGNSLMRPRRSSSLFSNESISNSTNATQMLSPEEIKKQLKINELNNMKIEKYMELCERDVFKKILIVGTSVSSPNKMKTFKPHQLQTFKVGNLFRNSVEFTEYNKLLNEKILCLSKLSTMNKINLIKFLSLNNGIDPEPKFEEIKDILYEFTYHSISPCEKIKALLKLHEIMTYSQEMSNDDYLSLLIYYIITIVPRDIFLNAEFIRLFRYKKKLVETESFALTNLEAALVFVEGLTKNDFSNELQDKLTVNESKILENSISSRVSLPSKTAIMHKNNGNNGSNLGDIVTPTIQRPDVTRSNSYDGFRTVFDSSLKNIIGKIRSYTPPHPNNTSNNNLHSSNNLNIPRSSSQLSMELSNRDTTEMSRDGSRSTSSSSRSSASLEHGNREFTGDLTVTASINGADKKEFQKSWKKYKGYKFEDLTICELRDLFEIYQKMMQ.

Residues Glu40–Cys50 are compositionally biased toward basic and acidic residues. Positions Glu40–Lys66 are disordered. Positions Asn55–Lys66 are enriched in polar residues. Phosphoserine is present on residues Ser67, Ser163, Ser185, and Ser245. Residues Thr273–Ser414 enclose the VPS9 domain. The tract at residues Ile494–Arg560 is disordered. Low complexity predominate over residues Asn503–Asn517. Positions Ile518–Leu529 are enriched in polar residues. Basic and acidic residues predominate over residues Ser530–Ser542. Positions Arg543–Ser554 are enriched in low complexity.

Its subcellular location is the cytoplasm. In terms of biological role, putative GTPase-activating protein. This Saccharomyces cerevisiae (strain ATCC 204508 / S288c) (Baker's yeast) protein is Protein MUK1 (MUK1).